The following is a 374-amino-acid chain: Eukaryotic translation initiation factor 3 subunit M (374 aa).

At S2 the chain carries N-acetylserine. Phosphoserine is present on residues S2 and S152. One can recognise a PCI domain in the interval 180–339 (AASKVMVELL…RKVVVSHSTH (160 aa)). K254 carries the post-translational modification N6-acetyllysine. The interval 344-374 (KQQWQQLYDTLNAWKQNLNKVKNSLLSLSDT) is interaction with HSV-1 and HSV-2. S367 bears the Phosphoserine mark.

In terms of assembly, component of the eukaryotic translation initiation factor 3 (eIF-3) complex, which is composed of 13 subunits: EIF3A, EIF3B, EIF3C, EIF3D, EIF3E, EIF3F, EIF3G, EIF3H, EIF3I, EIF3J, EIF3K, EIF3L and EIF3M. The eIF-3 complex appears to include 3 stable modules: module A is composed of EIF3A, EIF3B, EIF3G and EIF3I; module B is composed of EIF3F, EIF3H, and EIF3M; and module C is composed of EIF3C, EIF3D, EIF3E, EIF3K and EIF3L. EIF3C of module C binds EIF3B of module A and EIF3H of module B, thereby linking the three modules. EIF3J is a labile subunit that binds to the eIF-3 complex via EIF3B. The eIF-3 complex interacts with RPS6KB1 under conditions of nutrient depletion. Mitogenic stimulation leads to binding and activation of a complex composed of MTOR and RPTOR, leading to phosphorylation and release of RPS6KB1 and binding of EIF4B to eIF-3. As to expression, broadly expressed.

Its subcellular location is the cytoplasm. Functionally, component of the eukaryotic translation initiation factor 3 (eIF-3) complex, which is required for several steps in the initiation of protein synthesis. The eIF-3 complex associates with the 40S ribosome and facilitates the recruitment of eIF-1, eIF-1A, eIF-2:GTP:methionyl-tRNAi and eIF-5 to form the 43S pre-initiation complex (43S PIC). The eIF-3 complex stimulates mRNA recruitment to the 43S PIC and scanning of the mRNA for AUG recognition. The eIF-3 complex is also required for disassembly and recycling of post-termination ribosomal complexes and subsequently prevents premature joining of the 40S and 60S ribosomal subunits prior to initiation. The eIF-3 complex specifically targets and initiates translation of a subset of mRNAs involved in cell proliferation, including cell cycling, differentiation and apoptosis, and uses different modes of RNA stem-loop binding to exert either translational activation or repression. In terms of biological role, (Microbial infection) May favor virus entry in case of infection with herpes simplex virus 1 (HSV1) or herpes simplex virus 2 (HSV2). The chain is Eukaryotic translation initiation factor 3 subunit M from Homo sapiens (Human).